We begin with the raw amino-acid sequence, 358 residues long: 3-dehydroquinate synthase (358 aa).

NAD(+) contacts are provided by residues 102–106 (GVVGD), 126–127 (TT), lysine 138, and lysine 147. Positions 180, 243, and 260 each coordinate Zn(2+).

This sequence belongs to the sugar phosphate cyclases superfamily. Dehydroquinate synthase family. Requires Co(2+) as cofactor. It depends on Zn(2+) as a cofactor. NAD(+) serves as cofactor.

It localises to the cytoplasm. The enzyme catalyses 7-phospho-2-dehydro-3-deoxy-D-arabino-heptonate = 3-dehydroquinate + phosphate. The protein operates within metabolic intermediate biosynthesis; chorismate biosynthesis; chorismate from D-erythrose 4-phosphate and phosphoenolpyruvate: step 2/7. Its function is as follows. Catalyzes the conversion of 3-deoxy-D-arabino-heptulosonate 7-phosphate (DAHP) to dehydroquinate (DHQ). The sequence is that of 3-dehydroquinate synthase from Shouchella clausii (strain KSM-K16) (Alkalihalobacillus clausii).